Consider the following 357-residue polypeptide: Retinoic acid-induced protein 3 (357 aa).

Topologically, residues 1–33 (MATTVPDGCRNGLKSKYYRLCDKAEAWGIVLET) are extracellular. Residues 34–54 (VATAGVVTSVAFMLTLPILVC) traverse the membrane as a helical segment. At 55 to 68 (KVQDSNRRKMLPTQ) the chain is on the cytoplasmic side. Residues 69–89 (FLFLLGVLGIFGLTFAFIIGL) form a helical membrane-spanning segment. Over 90-97 (DGSTGPTR) the chain is Extracellular. A helical membrane pass occupies residues 98–118 (FFLFGILFSICFSCLLAHAVS). At 119–129 (LTKLVRGRKPL) the chain is on the cytoplasmic side. The chain crosses the membrane as a helical span at residues 130 to 150 (SLLVILGLAVGFSLVQDVIAI). The Extracellular portion of the chain corresponds to 151–176 (EYIVLTMNRTNVNVFSELSAPRRNED). A glycan (N-linked (GlcNAc...) asparagine) is linked at asparagine 158. The chain crosses the membrane as a helical span at residues 177–197 (FVLLLTYVLFLMALTFLMSSF). Over 198–212 (TFCGSFTGWKRHGAH) the chain is Cytoplasmic. Residues 213 to 233 (IYLTMLLSIAIWVAWITLLML) traverse the membrane as a helical segment. Over 234–247 (PDFDRRWDDTILSS) the chain is Extracellular. The helical transmembrane segment at 248-268 (ALAANGWVFLLAYVSPEFWLL) threads the bilayer. Over 269 to 357 (TKQRNPMDYP…KDYEVKKEGS (89 aa)) the chain is Cytoplasmic. Serine 301 is modified (phosphoserine). Tyrosine 317 and tyrosine 320 each carry phosphotyrosine. Position 345 is a phosphoserine (serine 345). A phosphotyrosine mark is found at tyrosine 347 and tyrosine 350.

Belongs to the G-protein coupled receptor 3 family. As to quaternary structure, interacts (via its transmembrane domain) with EGFR. Phosphorylated in two conserved double-tyrosine motifs, Tyr-317/Tyr-320 and Tyr-347/Tyr-350, by EGFR; leading to inactivation of the tumor suppressive function of GPRC5A in lung cancer cells. Tyr-317 and Tyr-320 are the preferred residues responsible for EGFR-mediated GPRC5A phosphorylation. As to expression, expressed at high level in fetal and adult lung tissues but repressed in most human lung cancers. Constitutively expressed in fetal kidney and adult placenta, kidney, prostate, testis, ovary, small intestine, colon, stomach, and spinal cord at low to moderate levels. Not detectable in fetal heart, brain, and liver and adult heart, brain, liver, skeletal muscle, pancreas, spleen, thymus, and peripheral leukocytes. According to PubMed:10783259, expressed at low but detectable level in pancreas and heart.

Its subcellular location is the cell membrane. It localises to the cytoplasmic vesicle membrane. Functionally, orphan receptor. Could be involved in modulating differentiation and maintaining homeostasis of epithelial cells. This retinoic acid-inducible GPCR provide evidence for a possible interaction between retinoid and G-protein signaling pathways. Functions as a negative modulator of EGFR signaling. May act as a lung tumor suppressor. The sequence is that of Retinoic acid-induced protein 3 (GPRC5A) from Homo sapiens (Human).